Consider the following 484-residue polypeptide: NADH-quinone oxidoreductase subunit N (484 aa).

The next 13 membrane-spanning stretches (helical) occupy residues 10–30, 40–60, 74–94, 108–128, 129–149, 163–183, 203–223, 237–257, 272–292, 299–319, 327–347, 370–390, and 404–424; these read LALP…VDLF, FYLT…TQWG, SLGA…LAYT, FYLL…GGSL, LSLY…VAYH, FVLG…VYGA, LMLL…LGAA, PTPV…ALFM, EPML…IAIV, MLAY…TAGT, LFYT…ITVL, YAGV…TVGF, and GHIP…FYYL.

Belongs to the complex I subunit 2 family. In terms of assembly, NDH-1 is composed of 14 different subunits. Subunits NuoA, H, J, K, L, M, N constitute the membrane sector of the complex.

It localises to the cell inner membrane. It carries out the reaction a quinone + NADH + 5 H(+)(in) = a quinol + NAD(+) + 4 H(+)(out). Its function is as follows. NDH-1 shuttles electrons from NADH, via FMN and iron-sulfur (Fe-S) centers, to quinones in the respiratory chain. The immediate electron acceptor for the enzyme in this species is believed to be ubiquinone. Couples the redox reaction to proton translocation (for every two electrons transferred, four hydrogen ions are translocated across the cytoplasmic membrane), and thus conserves the redox energy in a proton gradient. The polypeptide is NADH-quinone oxidoreductase subunit N (Halorhodospira halophila (strain DSM 244 / SL1) (Ectothiorhodospira halophila (strain DSM 244 / SL1))).